The following is a 214-amino-acid chain: Adenylate kinase (214 aa).

10-15 (GAGKGT) is an ATP binding site. Positions 30-59 (STGDMLRAAVKAGTPLGLEAKKVMDAGQLV) are NMP. AMP contacts are provided by residues T31, R36, 57–59 (QLV), 85–88 (GFPR), and Q92. The interval 122 to 159 (GRRVHPGSGRVYHIVFNQPKVEGKDDVTGEDLAIRPDD) is LID. ATP contacts are provided by residues R123 and 132–133 (VY). Residues R156 and R167 each coordinate AMP. Q200 provides a ligand contact to ATP.

Belongs to the adenylate kinase family. As to quaternary structure, monomer.

It localises to the cytoplasm. It carries out the reaction AMP + ATP = 2 ADP. The protein operates within purine metabolism; AMP biosynthesis via salvage pathway; AMP from ADP: step 1/1. Catalyzes the reversible transfer of the terminal phosphate group between ATP and AMP. Plays an important role in cellular energy homeostasis and in adenine nucleotide metabolism. This chain is Adenylate kinase, found in Shewanella woodyi (strain ATCC 51908 / MS32).